Consider the following 314-residue polypeptide: Ribosomal RNA small subunit methyltransferase H (314 aa).

S-adenosyl-L-methionine is bound by residues 36 to 38 (GGH), aspartate 56, phenylalanine 83, aspartate 104, and glutamine 111.

This sequence belongs to the methyltransferase superfamily. RsmH family.

It localises to the cytoplasm. It carries out the reaction cytidine(1402) in 16S rRNA + S-adenosyl-L-methionine = N(4)-methylcytidine(1402) in 16S rRNA + S-adenosyl-L-homocysteine + H(+). Specifically methylates the N4 position of cytidine in position 1402 (C1402) of 16S rRNA. The chain is Ribosomal RNA small subunit methyltransferase H from Syntrophotalea carbinolica (strain DSM 2380 / NBRC 103641 / GraBd1) (Pelobacter carbinolicus).